A 245-amino-acid chain; its full sequence is Ribonuclease PH (245 aa).

Residues Arg86 and 124–126 contribute to the phosphate site; that span reads GTR.

It belongs to the RNase PH family. As to quaternary structure, homohexameric ring arranged as a trimer of dimers.

It carries out the reaction tRNA(n+1) + phosphate = tRNA(n) + a ribonucleoside 5'-diphosphate. Its function is as follows. Phosphorolytic 3'-5' exoribonuclease that plays an important role in tRNA 3'-end maturation. Removes nucleotide residues following the 3'-CCA terminus of tRNAs; can also add nucleotides to the ends of RNA molecules by using nucleoside diphosphates as substrates, but this may not be physiologically important. Probably plays a role in initiation of 16S rRNA degradation (leading to ribosome degradation) during starvation. This chain is Ribonuclease PH, found in Bacillus cereus (strain ATCC 10987 / NRS 248).